Consider the following 170-residue polypeptide: Probable calcium-binding protein CML27 (170 aa).

A2 is subject to N-acetylalanine. 4 consecutive EF-hand domains span residues 19–54 (ANPEELKKVFDQFDSNGDGKISVLELGGVFKAMGTS), 55–85 (YTETELNRVLEEVDTDRDGYINLDEFSTLCR), 88–123 (SSAAEIRDAFDLYDQDKNGLISASELHQVLNRLGMS), and 136–159 (VDADGDGNVNFEEFQKMMTSSSLL). Residues D32, N34, D36, K38, E43, D68, D70, D72, Y74, E79, D101, D103, N105, E112, D137, D139, D141, N143, and E148 each contribute to the Ca(2+) site.

Its function is as follows. Potential calcium sensor. The protein is Probable calcium-binding protein CML27 (CML27) of Arabidopsis thaliana (Mouse-ear cress).